The primary structure comprises 583 residues: Peptidyl-prolyl cis-trans isomerase FKBP10 (583 aa).

A signal peptide spans Met1–Ala27. PPIase FKBP-type domains lie at Gly63 to Trp151, Ser175 to His263, Gly287 to His375, and Gly400 to Glu487. N-linked (GlcNAc...) asparagine glycans are attached at residues Asn71, Asn183, and Asn295. EF-hand domains follow at residues Trp498–Glu533 and Asp543–Arg578. Ca(2+) is bound by residues Asp511, Asn513, Asp515, Glu517, Glu522, Asp556, Asn558, Asp560, Lys562, and Glu567. The interval Gly534–Leu583 is disordered. The span at Arg557 to Leu583 shows a compositional bias: basic and acidic residues. The Prevents secretion from ER motif lies at His580–Leu583.

Glycosylated and phosphorylated.

The protein localises to the endoplasmic reticulum lumen. The enzyme catalyses [protein]-peptidylproline (omega=180) = [protein]-peptidylproline (omega=0). Inhibited by both FK506 and rapamycin, but not by cyclosporin A. Functionally, PPIases accelerate the folding of proteins during protein synthesis. The polypeptide is Peptidyl-prolyl cis-trans isomerase FKBP10 (FKBP10) (Bos taurus (Bovine)).